The following is a 475-amino-acid chain: Aspartyl/glutamyl-tRNA(Asn/Gln) amidotransferase subunit B (475 aa).

This sequence belongs to the GatB/GatE family. GatB subfamily. Heterotrimer of A, B and C subunits.

It carries out the reaction L-glutamyl-tRNA(Gln) + L-glutamine + ATP + H2O = L-glutaminyl-tRNA(Gln) + L-glutamate + ADP + phosphate + H(+). The catalysed reaction is L-aspartyl-tRNA(Asn) + L-glutamine + ATP + H2O = L-asparaginyl-tRNA(Asn) + L-glutamate + ADP + phosphate + 2 H(+). Its function is as follows. Allows the formation of correctly charged Asn-tRNA(Asn) or Gln-tRNA(Gln) through the transamidation of misacylated Asp-tRNA(Asn) or Glu-tRNA(Gln) in organisms which lack either or both of asparaginyl-tRNA or glutaminyl-tRNA synthetases. The reaction takes place in the presence of glutamine and ATP through an activated phospho-Asp-tRNA(Asn) or phospho-Glu-tRNA(Gln). This is Aspartyl/glutamyl-tRNA(Asn/Gln) amidotransferase subunit B from Chlorobium chlorochromatii (strain CaD3).